The sequence spans 171 residues: MPLLDSFTVDHTIMKAPAVRVAKTMKTPHGDEITVFDLRFCVPNKEVMPERGIHTLEHLFAGFMRNHLNGNGVEIIDISPMGCRTGFYMSLIGTPDEQRVADAWKAAMADVLKVTDQRKIPELNEYQCGTYHMHSLEEAQEIAKGIIDRGVRINHNEELALPKEKLTELHI.

Residues histidine 54, histidine 58, and cysteine 128 each contribute to the Fe cation site.

This sequence belongs to the LuxS family. Homodimer. Fe cation is required as a cofactor.

It catalyses the reaction S-(5-deoxy-D-ribos-5-yl)-L-homocysteine = (S)-4,5-dihydroxypentane-2,3-dione + L-homocysteine. Its function is as follows. Involved in the synthesis of autoinducer 2 (AI-2) which is secreted by bacteria and is used to communicate both the cell density and the metabolic potential of the environment. The regulation of gene expression in response to changes in cell density is called quorum sensing. Catalyzes the transformation of S-ribosylhomocysteine (RHC) to homocysteine (HC) and 4,5-dihydroxy-2,3-pentadione (DPD). The protein is S-ribosylhomocysteine lyase of Yersinia enterocolitica serotype O:8 / biotype 1B (strain NCTC 13174 / 8081).